The primary structure comprises 200 residues: ADP-ribosylation factor-like protein 4A (200 aa).

Gly-2 carries N-myristoyl glycine lipidation. Residues 27–34, 75–79, and 134–137 each bind GTP; these read GLDCAGKT, DVGGQ, and NKQD.

This sequence belongs to the small GTPase superfamily. Arf family. In terms of assembly, interacts with CYTH2. Interacts with KPNA2; the interaction is direct. Does not interact with ARL4A. Myristoylated.

It is found in the cell membrane. The protein localises to the cytoplasm. It localises to the nucleus. The protein resides in the nucleolus. In terms of biological role, small GTP-binding protein which cycles between an inactive GDP-bound and an active GTP-bound form, and the rate of cycling is regulated by guanine nucleotide exchange factors (GEF) and GTPase-activating proteins (GAP). GTP-binding protein that does not act as an allosteric activator of the cholera toxin catalytic subunit. Recruits CYTH1, CYTH2, CYTH3 and CYTH4 to the plasma membrane in GDP-bound form. This is ADP-ribosylation factor-like protein 4A (ARL4A) from Homo sapiens (Human).